A 70-amino-acid polypeptide reads, in one-letter code: Acyl carrier protein (70 aa).

Residues 2 to 70 (SDIADRVKKI…ETIQTFGDAP (69 aa)) form the Carrier domain. Ser37 carries the post-translational modification O-(pantetheine 4'-phosphoryl)serine.

It belongs to the acyl carrier protein (ACP) family. Post-translationally, 4'-phosphopantetheine is transferred from CoA to a specific serine of apo-ACP by AcpS. This modification is essential for activity because fatty acids are bound in thioester linkage to the sulfhydryl of the prosthetic group.

The protein resides in the cytoplasm. Its pathway is lipid metabolism; fatty acid biosynthesis. In terms of biological role, carrier of the growing fatty acid chain in fatty acid biosynthesis. The protein is Acyl carrier protein of Cereibacter sphaeroides (Rhodobacter sphaeroides).